Consider the following 388-residue polypeptide: Dual-specificity RNA methyltransferase RlmN (388 aa).

Glu-109 serves as the catalytic Proton acceptor. The 240-residue stretch at Glu-115 to Asp-354 folds into the Radical SAM core domain. Cys-122 and Cys-359 are joined by a disulfide. [4Fe-4S] cluster contacts are provided by Cys-129, Cys-133, and Cys-136. S-adenosyl-L-methionine contacts are provided by residues Gly-183–Glu-184, Ser-215, Ser-237–His-239, and Asn-316. The S-methylcysteine intermediate role is filled by Cys-359.

It belongs to the radical SAM superfamily. RlmN family. [4Fe-4S] cluster is required as a cofactor.

It is found in the cytoplasm. The catalysed reaction is adenosine(2503) in 23S rRNA + 2 reduced [2Fe-2S]-[ferredoxin] + 2 S-adenosyl-L-methionine = 2-methyladenosine(2503) in 23S rRNA + 5'-deoxyadenosine + L-methionine + 2 oxidized [2Fe-2S]-[ferredoxin] + S-adenosyl-L-homocysteine. The enzyme catalyses adenosine(37) in tRNA + 2 reduced [2Fe-2S]-[ferredoxin] + 2 S-adenosyl-L-methionine = 2-methyladenosine(37) in tRNA + 5'-deoxyadenosine + L-methionine + 2 oxidized [2Fe-2S]-[ferredoxin] + S-adenosyl-L-homocysteine. Its function is as follows. Specifically methylates position 2 of adenine 2503 in 23S rRNA and position 2 of adenine 37 in tRNAs. m2A2503 modification seems to play a crucial role in the proofreading step occurring at the peptidyl transferase center and thus would serve to optimize ribosomal fidelity. This is Dual-specificity RNA methyltransferase RlmN from Cronobacter sakazakii (strain ATCC BAA-894) (Enterobacter sakazakii).